The chain runs to 185 residues: Ribosome-recycling factor (185 aa).

Belongs to the RRF family.

Its subcellular location is the cytoplasm. In terms of biological role, responsible for the release of ribosomes from messenger RNA at the termination of protein biosynthesis. May increase the efficiency of translation by recycling ribosomes from one round of translation to another. The sequence is that of Ribosome-recycling factor from Corynebacterium glutamicum (strain ATCC 13032 / DSM 20300 / JCM 1318 / BCRC 11384 / CCUG 27702 / LMG 3730 / NBRC 12168 / NCIMB 10025 / NRRL B-2784 / 534).